The sequence spans 163 residues: MASEHSFDISAALDKQELKNAFEQAKKELDSRYDLKGIKCEIDLSEKESIFKLSSSSEGKLDVLKDIVISKLIKRGINPNAIKELSRESGAMFRLNLKANDAIDSENAKKINKAIKDSKLKVNSSIRGEEIRVVAKQIDDLQAVMKLVKELDLELNISFKNLK.

It belongs to the YajQ family.

Functionally, nucleotide-binding protein. The sequence is that of Nucleotide-binding protein CJE0423 from Campylobacter jejuni (strain RM1221).